We begin with the raw amino-acid sequence, 427 residues long: Trigger factor (427 aa).

The PPIase FKBP-type domain occupies 163 to 248 (GDTVVIDFVG…VNEVKAKEVP (86 aa)).

The protein belongs to the FKBP-type PPIase family. Tig subfamily.

The protein resides in the cytoplasm. It carries out the reaction [protein]-peptidylproline (omega=180) = [protein]-peptidylproline (omega=0). Involved in protein export. Acts as a chaperone by maintaining the newly synthesized protein in an open conformation. Functions as a peptidyl-prolyl cis-trans isomerase. The sequence is that of Trigger factor from Streptococcus thermophilus (strain CNRZ 1066).